Reading from the N-terminus, the 300-residue chain is Enoyl-CoA hydratase domain-containing protein 3, mitochondrial (300 aa).

A mitochondrion-targeting transit peptide spans 1–66 (MAVVAGLRAF…RNIVLSNPRR (66 aa)). Residues 34–53 (GSAGPAGSESEPRLTSTRQQ) are disordered. N6-succinyllysine is present on K110.

The protein belongs to the enoyl-CoA hydratase/isomerase family.

The protein resides in the mitochondrion. Its function is as follows. May play a role in fatty acid biosynthesis and insulin sensitivity. This is Enoyl-CoA hydratase domain-containing protein 3, mitochondrial from Mus musculus (Mouse).